Here is a 145-residue protein sequence, read N- to C-terminus: Neutral phospholipase A2 paradoxin-like beta chain (145 aa).

A signal peptide spans 1 to 27 (MHPAHLLVLLAVCVSLLGASDIPPLPL). Cystine bridges form between Cys-38–Cys-98, Cys-54–Cys-144, Cys-56–Cys-72, Cys-71–Cys-125, Cys-78–Cys-118, Cys-87–Cys-111, and Cys-105–Cys-116.

Belongs to the phospholipase A2 family. Group I subfamily. N49 sub-subfamily. Heterotrimer of alpha, beta, and gamma chains; non-covalently linked. In terms of tissue distribution, expressed by the venom gland.

It localises to the secreted. Heterotrimer: Snake venom phospholipase A2 (PLA2) heterotrimer that acts as a potent presynaptic neurotoxin by blocking synaptic transmission and synaptic vesicle recycling. May act by binding in a calcium-dependent fashion to neurotonal pentraxin-1 (NPTX1) and neurotonal pentraxin-2 (NPTX2), but not to neuronal pentraxin receptor (NPTXR). Also binds to taipoxin-associated calcium binding protein 49 (RCN2), a protein localized in the lumen of endoplasmic reticulum. Functionally, monomer (beta chain): Snake venom phospholipase A2 homolog that is neither toxic nor enzymatically active. Does not bind calcium. This chain is Neutral phospholipase A2 paradoxin-like beta chain, found in Oxyuranus microlepidotus (Inland taipan).